A 227-amino-acid polypeptide reads, in one-letter code: Cytochrome c oxidase subunit 2 (227 aa).

Over 1–14 (MAYPFQLGLQDATS) the chain is Mitochondrial intermembrane. The chain crosses the membrane as a helical span at residues 15 to 45 (PIMEELTNFHDHTLMIVFLISTLVLYIISLM). At 46 to 59 (LTTKLTHTSTMDAQ) the chain is on the mitochondrial matrix side. Residues 60-87 (EVETIWTILPAVILILIALPSLRILYMM) form a helical membrane-spanning segment. The Mitochondrial intermembrane portion of the chain corresponds to 88–227 (DEINNPALTV…YFEDWSASMI (140 aa)). His161, Cys196, Glu198, Cys200, His204, and Met207 together coordinate Cu cation. Residue Glu198 coordinates Mg(2+). Tyr218 is subject to Phosphotyrosine.

The protein belongs to the cytochrome c oxidase subunit 2 family. In terms of assembly, component of the cytochrome c oxidase (complex IV, CIV), a multisubunit enzyme composed of 14 subunits. The complex is composed of a catalytic core of 3 subunits MT-CO1, MT-CO2 and MT-CO3, encoded in the mitochondrial DNA, and 11 supernumerary subunits COX4I, COX5A, COX5B, COX6A, COX6B, COX6C, COX7A, COX7B, COX7C, COX8 and NDUFA4, which are encoded in the nuclear genome. The complex exists as a monomer or a dimer and forms supercomplexes (SCs) in the inner mitochondrial membrane with NADH-ubiquinone oxidoreductase (complex I, CI) and ubiquinol-cytochrome c oxidoreductase (cytochrome b-c1 complex, complex III, CIII), resulting in different assemblies (supercomplex SCI(1)III(2)IV(1) and megacomplex MCI(2)III(2)IV(2)). Found in a complex with TMEM177, COA6, COX18, COX20, SCO1 and SCO2. Interacts with TMEM177 in a COX20-dependent manner. Interacts with COX20. Interacts with COX16. Cu cation serves as cofactor.

The protein localises to the mitochondrion inner membrane. It catalyses the reaction 4 Fe(II)-[cytochrome c] + O2 + 8 H(+)(in) = 4 Fe(III)-[cytochrome c] + 2 H2O + 4 H(+)(out). Its function is as follows. Component of the cytochrome c oxidase, the last enzyme in the mitochondrial electron transport chain which drives oxidative phosphorylation. The respiratory chain contains 3 multisubunit complexes succinate dehydrogenase (complex II, CII), ubiquinol-cytochrome c oxidoreductase (cytochrome b-c1 complex, complex III, CIII) and cytochrome c oxidase (complex IV, CIV), that cooperate to transfer electrons derived from NADH and succinate to molecular oxygen, creating an electrochemical gradient over the inner membrane that drives transmembrane transport and the ATP synthase. Cytochrome c oxidase is the component of the respiratory chain that catalyzes the reduction of oxygen to water. Electrons originating from reduced cytochrome c in the intermembrane space (IMS) are transferred via the dinuclear copper A center (CU(A)) of subunit 2 and heme A of subunit 1 to the active site in subunit 1, a binuclear center (BNC) formed by heme A3 and copper B (CU(B)). The BNC reduces molecular oxygen to 2 water molecules using 4 electrons from cytochrome c in the IMS and 4 protons from the mitochondrial matrix. The polypeptide is Cytochrome c oxidase subunit 2 (MT-CO2) (Hybomys univittatus (Peter's striped mouse)).